An 84-amino-acid chain; its full sequence is Delta-stichotoxin-Shd3a (84 aa).

A signal peptide spans 1–19 (MAYLKIVLVALMLVLGVSA). A propeptide spanning residues 20–33 (MRLSDQEDQDVSVV) is cleaved from the precursor. 3 cysteine pairs are disulfide-bonded: C38–C78, C40–C68, and C61–C79. K83 is modified (lysine amide).

The protein belongs to the sea anemone sodium channel inhibitory toxin family. Type II subfamily.

Its subcellular location is the secreted. The protein resides in the nematocyst. In terms of biological role, binds specifically to voltage-gated sodium channels (Nav), thereby delaying their inactivation during signal transduction. The sequence is that of Delta-stichotoxin-Shd3a from Stichodactyla haddoni (Saddle carpet anemone).